We begin with the raw amino-acid sequence, 93 residues long: Integration host factor subunit beta (93 aa).

It belongs to the bacterial histone-like protein family. As to quaternary structure, heterodimer of an alpha and a beta chain.

Its function is as follows. This protein is one of the two subunits of integration host factor, a specific DNA-binding protein that functions in genetic recombination as well as in transcriptional and translational control. The protein is Integration host factor subunit beta of Vibrio parahaemolyticus serotype O3:K6 (strain RIMD 2210633).